Consider the following 202-residue polypeptide: Protease (202 aa).

Residues histidine 55, aspartate 72, and cysteine 122 contribute to the active site.

Belongs to the peptidase C5 family. Interacts with protease cofactor pVI-C; this interaction is necessary for protease activation.

It is found in the virion. The protein localises to the host nucleus. The enzyme catalyses Cleaves proteins of the adenovirus and its host cell at two consensus sites: -Yaa-Xaa-Gly-Gly-|-Xaa- and -Yaa-Xaa-Gly-Xaa-|-Gly- (in which Yaa is Met, Ile or Leu, and Xaa is any amino acid).. Requires DNA and protease cofactor for maximal activation. Inside nascent virions, becomes partially activated by binding to the viral DNA, allowing it to cleave the cofactor that binds to the protease and fully activates it. Actin, like the viral protease cofactor, seems to act as a cofactor in the cleavage of cytokeratin 18 and of actin itself. Cleaves viral precursor proteins (pTP, pIIIa, pVI, pVII, pVIII, and pX) inside newly assembled particles giving rise to mature virions. Protease complexed to its cofactor slides along the viral DNA to specifically locate and cleave the viral precursors. Mature virions have a weakened organization compared to the unmature virions, thereby facilitating subsequent uncoating. Without maturation, the particle lacks infectivity and is unable to uncoat. Late in adenovirus infection, in the cytoplasm, may participate in the cytoskeleton destruction. Cleaves host cell cytoskeletal keratins K7 and K18. This Bovine adenovirus 7 (BAdV-7) protein is Protease.